We begin with the raw amino-acid sequence, 129 residues long: Small ribosomal subunit protein uS11 (129 aa).

The protein belongs to the universal ribosomal protein uS11 family. Part of the 30S ribosomal subunit. Interacts with proteins S7 and S18. Binds to IF-3.

Located on the platform of the 30S subunit, it bridges several disparate RNA helices of the 16S rRNA. Forms part of the Shine-Dalgarno cleft in the 70S ribosome. This Limosilactobacillus reuteri (strain DSM 20016) (Lactobacillus reuteri) protein is Small ribosomal subunit protein uS11.